Here is a 359-residue protein sequence, read N- to C-terminus: Peptide chain release factor 1 (359 aa).

At Gln235 the chain carries N5-methylglutamine.

The protein belongs to the prokaryotic/mitochondrial release factor family. Post-translationally, methylated by PrmC. Methylation increases the termination efficiency of RF1.

Its subcellular location is the cytoplasm. Functionally, peptide chain release factor 1 directs the termination of translation in response to the peptide chain termination codons UAG and UAA. The protein is Peptide chain release factor 1 of Anaplasma phagocytophilum (strain HZ).